The sequence spans 44 residues: Alpha-amylase inhibitor helianthamide (44 aa).

3 disulfide bridges follow: Cys6–Cys38, Cys16–Cys33, and Cys20–Cys39. Residues 7 to 10 (YIYH) are inhibitory motif.

Belongs to the sea anemone alpha-amylase inhibitor family.

The protein resides in the secreted. Functionally, specific pancreatic alpha-amylase (AMY2A) inhibitor. The recombinant peptide inhibits human pancreatic (Ki=0.01 nM) and porcine pancreatic alpha-amylases (Ki=0.1 nM). In Stichodactyla helianthus (Sun anemone), this protein is Alpha-amylase inhibitor helianthamide.